The primary structure comprises 1089 residues: Platelet-derived growth factor receptor alpha (1089 aa).

The signal sequence occupies residues 1–23 (MGTSHPAFLVLGCLLTGLSLILC). 5 Ig-like C2-type domains span residues 24 to 113 (QLSL…NELE), 117 to 201 (IYIY…FQTI), 202 to 306 (PFNV…KKVT), 319 to 410 (PTFS…FELL), and 414 to 517 (PSSI…LKLV). Residues 24–528 (QLSLPSILPN…PTLRSELTVA (505 aa)) are Extracellular-facing. Asparagine 42, asparagine 76, asparagine 103, and asparagine 179 each carry an N-linked (GlcNAc...) asparagine glycan. An intrachain disulfide couples cysteine 49 to cysteine 100. Cystine bridges form between cysteine 150/cysteine 189 and cysteine 235/cysteine 290. Asparagine 353, asparagine 359, asparagine 458, and asparagine 468 each carry an N-linked (GlcNAc...) asparagine glycan. An intrachain disulfide couples cysteine 435 to cysteine 501. A helical transmembrane segment spans residues 529–549 (AAVLVLLVIVIISLIVLVVIW). Residues 550-1089 (KQKPRYEIRW…SSDLVEDSFL (540 aa)) lie on the Cytoplasmic side of the membrane. Phosphotyrosine; by autocatalysis occurs at positions 572 and 574. Positions 593–954 (LVLGRVLGSG…HLSEIVENLL (362 aa)) constitute a Protein kinase domain. Residues 599 to 607 (LGSGAFGKV) and lysine 627 each bind ATP. Phosphotyrosine; by autocatalysis is present on residues tyrosine 720, tyrosine 731, tyrosine 742, tyrosine 754, tyrosine 762, and tyrosine 768. Aspartate 818 serves as the catalytic Proton acceptor. A phosphotyrosine; by autocatalysis mark is found at tyrosine 849, tyrosine 988, and tyrosine 1018. The tract at residues 1018–1089 (YIIPLPDIDP…SSDLVEDSFL (72 aa)) is disordered. A compositionally biased stretch (polar residues) spans 1041–1059 (SSQTSEESAIETGSSSSTF). Acidic residues predominate over residues 1065 to 1089 (ETIEDIDMMDDIGIDSSDLVEDSFL).

This sequence belongs to the protein kinase superfamily. Tyr protein kinase family. CSF-1/PDGF receptor subfamily. In terms of assembly, interacts with homodimeric PDGFA, PDGFB and PDGFC, and with heterodimers formed by PDGFA and PDGFB. Monomer in the absence of bound ligand. Interaction with dimeric PDGFA, PDGFB and/or PDGFC leads to receptor dimerization, where both PDGFRA homodimers and heterodimers with PDGFRB are observed. Interacts (tyrosine phosphorylated) with SHB (via SH2 domain). Interacts (tyrosine phosphorylated) with SHF (via SH2 domain). Interacts (tyrosine phosphorylated) with SRC (via SH2 domain). Interacts (tyrosine phosphorylated) with PIK3R1. Interacts (tyrosine phosphorylated) with PLCG1 (via SH2 domain). Interacts (tyrosine phosphorylated) with CRK, GRB2 and GRB7. Interacts with CD248; this interaction promotes PDGF receptor signaling pathway. (Microbial infection) Interacts with human cytomegalovirus/HHV-5 envelope glycoprotein B/gB. Also interacts with the trimeric complex gH-gL-gO. Trimer-PDGFRA interaction has an inhibitory effect on PDGFRA signaling. In terms of processing, N-glycosylated. Post-translationally, ubiquitinated, leading to its internalization and degradation. Autophosphorylated on tyrosine residues upon ligand binding. Autophosphorylation occurs in trans, i.e. one subunit of the dimeric receptor phosphorylates tyrosine residues on the other subunit. Phosphorylation at Tyr-731 and Tyr-742 is important for interaction with PIK3R1. Phosphorylation at Tyr-720 and Tyr-754 is important for interaction with PTPN11. Phosphorylation at Tyr-762 is important for interaction with CRK. Phosphorylation at Tyr-572 and Tyr-574 is important for interaction with SRC and SRC family members. Phosphorylation at Tyr-988 and Tyr-1018 is important for interaction with PLCG1. Detected in platelets (at protein level). Widely expressed. Detected in brain, fibroblasts, smooth muscle, heart, and embryo. Expressed in primary and metastatic colon tumors and in normal colon tissue.

Its subcellular location is the cell membrane. The protein localises to the cell projection. The protein resides in the cilium. It localises to the golgi apparatus. The catalysed reaction is L-tyrosyl-[protein] + ATP = O-phospho-L-tyrosyl-[protein] + ADP + H(+). Present in an inactive conformation in the absence of bound ligand. Binding of PDGFA and/or PDGFB leads to dimerization and activation by autophosphorylation on tyrosine residues. Inhibited by imatinib, nilotinib and sorafenib. Functionally, tyrosine-protein kinase that acts as a cell-surface receptor for PDGFA, PDGFB and PDGFC and plays an essential role in the regulation of embryonic development, cell proliferation, survival and chemotaxis. Depending on the context, promotes or inhibits cell proliferation and cell migration. Plays an important role in the differentiation of bone marrow-derived mesenchymal stem cells. Required for normal skeleton development and cephalic closure during embryonic development. Required for normal development of the mucosa lining the gastrointestinal tract, and for recruitment of mesenchymal cells and normal development of intestinal villi. Plays a role in cell migration and chemotaxis in wound healing. Plays a role in platelet activation, secretion of agonists from platelet granules, and in thrombin-induced platelet aggregation. Binding of its cognate ligands - homodimeric PDGFA, homodimeric PDGFB, heterodimers formed by PDGFA and PDGFB or homodimeric PDGFC -leads to the activation of several signaling cascades; the response depends on the nature of the bound ligand and is modulated by the formation of heterodimers between PDGFRA and PDGFRB. Phosphorylates PIK3R1, PLCG1, and PTPN11. Activation of PLCG1 leads to the production of the cellular signaling molecules diacylglycerol and inositol 1,4,5-trisphosphate, mobilization of cytosolic Ca(2+) and the activation of protein kinase C. Phosphorylates PIK3R1, the regulatory subunit of phosphatidylinositol 3-kinase, and thereby mediates activation of the AKT1 signaling pathway. Mediates activation of HRAS and of the MAP kinases MAPK1/ERK2 and/or MAPK3/ERK1. Promotes activation of STAT family members STAT1, STAT3 and STAT5A and/or STAT5B. Receptor signaling is down-regulated by protein phosphatases that dephosphorylate the receptor and its down-stream effectors, and by rapid internalization of the activated receptor. The sequence is that of Platelet-derived growth factor receptor alpha (PDGFRA) from Homo sapiens (Human).